The primary structure comprises 190 residues: UPF0301 protein Pden_0436 (190 aa).

Belongs to the UPF0301 (AlgH) family.

The protein is UPF0301 protein Pden_0436 of Paracoccus denitrificans (strain Pd 1222).